The chain runs to 365 residues: MIKFLSALILLLVTTAAQAERIRDLTSVQGVRQNSLIGYGLVVGLDGTGDQTTQTPFTTQTLNNMLSQLGITVPTGTNMQLKNVAAVMVTASLPPFGRQGQTIDVVVSSMGNAKSLRGGTLLMTPLKGVDSQVYALAQGNILVGGAGASAGGSSVQVNQLNGGRITNGAVIERELPSQFGVGNTLNLQLNDEDFSMAQQIADTINRVRGYGSATALDARTIQVRVPSGNSSQVRFLADIQNMQVNVTPQDAKVVINSRTGSVVMNREVTLDSCAIAQGNLSVTVNRQANVSQPDTPFGGGQTVVTPQTQIDLRQSGGSLQSVRSSASLNNVVRALNALGATPMDLMSILQSMQSAGCLRAKLEII.

The first 19 residues, 1-19, serve as a signal peptide directing secretion; sequence MIKFLSALILLLVTTAAQA.

This sequence belongs to the FlgI family. In terms of assembly, the basal body constitutes a major portion of the flagellar organelle and consists of four rings (L,P,S, and M) mounted on a central rod.

The protein resides in the periplasm. Its subcellular location is the bacterial flagellum basal body. Its function is as follows. Assembles around the rod to form the L-ring and probably protects the motor/basal body from shearing forces during rotation. The sequence is that of Flagellar P-ring protein (flgI) from Escherichia coli O157:H7.